We begin with the raw amino-acid sequence, 185 residues long: MAETAYVPRLRTEYDKSIRTQLTEKFGYGNVMQVPRLDKVVLNMGIGEAVNDRKKAEQAAADMALIAGQKPIITYSRVAISTFKLRENQPIGCKVTLRKAKMYEFIDRLITVALPRVRDFRGLNPKSFDGRGNYSLGIKEHIIFPEIDFDKSGESWGMDITVCTTARSDDEARALLTAFNFPFRQ.

The protein belongs to the universal ribosomal protein uL5 family. As to quaternary structure, part of the 50S ribosomal subunit; part of the 5S rRNA/L5/L18/L25 subcomplex. Contacts the 5S rRNA and the P site tRNA. Forms a bridge to the 30S subunit in the 70S ribosome.

Functionally, this is one of the proteins that bind and probably mediate the attachment of the 5S RNA into the large ribosomal subunit, where it forms part of the central protuberance. In the 70S ribosome it contacts protein S13 of the 30S subunit (bridge B1b), connecting the 2 subunits; this bridge is implicated in subunit movement. Contacts the P site tRNA; the 5S rRNA and some of its associated proteins might help stabilize positioning of ribosome-bound tRNAs. This Rhodopseudomonas palustris (strain BisB5) protein is Large ribosomal subunit protein uL5.